The following is a 426-amino-acid chain: Glucose-1-phosphate adenylyltransferase (426 aa).

Residues Y100, G165, 180-181 (EK), and S191 contribute to the alpha-D-glucose 1-phosphate site.

Belongs to the bacterial/plant glucose-1-phosphate adenylyltransferase family. As to quaternary structure, homotetramer.

The enzyme catalyses alpha-D-glucose 1-phosphate + ATP + H(+) = ADP-alpha-D-glucose + diphosphate. Its pathway is glycan biosynthesis; glycogen biosynthesis. In terms of biological role, involved in the biosynthesis of ADP-glucose, a building block required for the elongation reactions to produce glycogen. Catalyzes the reaction between ATP and alpha-D-glucose 1-phosphate (G1P) to produce pyrophosphate and ADP-Glc. This Acetivibrio thermocellus (strain ATCC 27405 / DSM 1237 / JCM 9322 / NBRC 103400 / NCIMB 10682 / NRRL B-4536 / VPI 7372) (Clostridium thermocellum) protein is Glucose-1-phosphate adenylyltransferase.